A 358-amino-acid polypeptide reads, in one-letter code: Na(+)/H(+) exchange regulatory cofactor NHE-RF1 (358 aa).

Ser2 carries the post-translational modification N-acetylserine. Residues Ser2 and Ser46 each carry the phosphoserine modification. In terms of domain architecture, PDZ 1 spans 14–94 (LCCLEKGPNG…AVRLLVVDPE (81 aa)). Residues 114–132 (QEAPGQAEPPAAAEVQGAG) show a composition bias toward low complexity. Residues 114–192 (QEAPGQAEPP…DPDSPAEASG (79 aa)) form a disordered region. Basic and acidic residues predominate over residues 135–152 (NEPREADKSHPEQRELRP). A PDZ 2 domain is found at 154–234 (LCTMKKGPSG…ETKLLVVDRE (81 aa)). Residues Ser162, Ser269, Ser280, Ser290, and Ser291 each carry the phosphoserine modification. The tract at residues 277 to 358 (ALESPRPALV…SKKNELFSNL (82 aa)) is disordered. Residues 288–306 (SASSDTSEELNSQDSPPKQ) show a composition bias toward polar residues. Thr293 is modified (phosphothreonine). Ser294, Ser299, and Ser302 each carry phosphoserine. Residues 307–319 (DSTAPSSTSSSDP) show a composition bias toward low complexity. The segment covering 348–358 (WSKKNELFSNL) has biased composition (basic and acidic residues).

In terms of assembly, homodimer, and heterodimer with NHERF2. Binds the N-termini of EZR, RDX and MSN. Binds the C-termini of PDGFRA, PDGFRB, ADRB2, NOS2 and CFTR. Binds ARHGAP17, EPI64, RACK1, OPRK1, GNAQ, CTNNB1 and PLCB3. Binds PDZK1. Interacts with CLCN3. Binds the C-terminus of PAG1. In resting T-cells, part of a PAG1-NHERF1-MSN complex which is disrupted upon TCR activation. Forms a complex with CFTR and SLC4A7. Forms a complex with SLC4A7 and ATP6V1B1. Interacts with TRPC4 (via the PDZ-binding domain). Directly interacts with HTR4. Interacts (via the PDZ 1 domain) with PODXL (via the C-terminal PDZ-binding motif DTHL); interaction is not detected in glomerular epithelium cells. Interacts (via the PDZ 1 domain) with PODXL (via the C-terminal PDZ-binding motif DTHL); the interaction take place early in the secretory pathway and is necessary for its apical membrane sorting. Interacts with SLC26A3. Interacts with MCC. Interacts with SLC34A1. Interacts (via the PDZ domains) with SLC26A6 isoform 4 and isoform 5. Interacts (via PDZ domains) with ACE2 (via PDZ-binding motif); the interaction may enhance ACE2 membrane residence. In terms of processing, phosphorylated on serine residues. As to expression, detected in liver, kidney, pancreas, prostate, spleen, small intestine and placenta, in particular in the syncytiotrophoblast.

The protein localises to the cytoplasm. It is found in the apical cell membrane. Its subcellular location is the endomembrane system. The protein resides in the cell projection. It localises to the filopodium. The protein localises to the ruffle. It is found in the microvillus. Its function is as follows. Scaffold protein that connects plasma membrane proteins with members of the ezrin/moesin/radixin family and thereby helps to link them to the actin cytoskeleton and to regulate their surface expression. Necessary for recycling of internalized ADRB2. Was first known to play a role in the regulation of the activity and subcellular location of SLC9A3. Necessary for cAMP-mediated phosphorylation and inhibition of SLC9A3. May enhance Wnt signaling. May participate in HTR4 targeting to microvilli. Involved in the regulation of phosphate reabsorption in the renal proximal tubules. Involved in sperm capacitation. May participate in the regulation of the chloride and bicarbonate homeostasis in spermatozoa. In Homo sapiens (Human), this protein is Na(+)/H(+) exchange regulatory cofactor NHE-RF1.